A 270-amino-acid chain; its full sequence is Mlc titration factor A (270 aa).

The Zn(2+) site is built by His111, His148, His152, and Glu211.

This sequence belongs to the MtfA family. Interacts with Mlc. Requires Zn(2+) as cofactor.

It is found in the cytoplasm. Functionally, involved in the modulation of the activity of the glucose-phosphotransferase system (glucose-PTS). Interacts with the transcriptional repressor Mlc, preventing its interaction with DNA and leading to the modulation of expression of genes regulated by Mlc, including ptsG, which encodes the PTS system glucose-specific EIICB component. Shows zinc-dependent metallopeptidase activity. This is Mlc titration factor A from Yersinia pestis bv. Antiqua (strain Nepal516).